Reading from the N-terminus, the 409-residue chain is MARSKFERKKPHVNIGTIGHVDHGKTTLTAAISATLSTLGSTAAKKFDEIDAAPEEKARGITINTAHVEYETDNRHYAHVDCPGHADYVKNMITGAAQMDGAILVVSAADGPMPQTREHILLAKQVGVPTLVVFLNKEDQVDDEELLELVELEGRELLSQYDFPGDDIPFVAGSALLALEAVTKNTSIKKGEDKWVDKIFSLMEAVDTYIPTPERDVDKTFLMAVEDVFSITGRGTVATGRIERGIIKVGDTIEIVGLRETRTTTITGLEMFQKTLEEGLAGDNIGILLRGVQKKDIERGMVLAKPGTITPHTQFEAEVYILTKEEGGRHTPFFPGYRPQFYVRTTDVTGTINQFTADDGTDAEMVMPGDRIKMTAELINAIAIEQGMRFAIREGGRTVGAGVVSKILK.

The region spanning lysine 10 to glutamate 214 is the tr-type G domain. The G1 stretch occupies residues glycine 19–threonine 26. Glycine 19–threonine 26 serves as a coordination point for GTP. Residue threonine 26 coordinates Mg(2+). The tract at residues glycine 60–asparagine 64 is G2. A G3 region spans residues aspartate 81–glycine 84. Residues aspartate 81–histidine 85 and asparagine 136–aspartate 139 each bind GTP. Residues asparagine 136–aspartate 139 are G4. The tract at residues serine 174–leucine 176 is G5.

Belongs to the TRAFAC class translation factor GTPase superfamily. Classic translation factor GTPase family. EF-Tu/EF-1A subfamily.

Its subcellular location is the plastid. The protein localises to the chloroplast. It carries out the reaction GTP + H2O = GDP + phosphate + H(+). In terms of biological role, GTP hydrolase that promotes the GTP-dependent binding of aminoacyl-tRNA to the A-site of ribosomes during protein biosynthesis. This is Elongation factor Tu, chloroplastic (tufA) from Porphyra purpurea (Red seaweed).